Here is a 203-residue protein sequence, read N- to C-terminus: Adenosylcobalamin/alpha-ribazole phosphatase (203 aa).

His-8 serves as the catalytic Tele-phosphohistidine intermediate. The active-site Proton donor/acceptor is Glu-81.

The protein belongs to the phosphoglycerate mutase family.

The catalysed reaction is adenosylcob(III)alamin 5'-phosphate + H2O = adenosylcob(III)alamin + phosphate. It catalyses the reaction alpha-ribazole 5'-phosphate + H2O = alpha-ribazole + phosphate. It functions in the pathway nucleoside biosynthesis; alpha-ribazole biosynthesis; alpha-ribazole from 5,6-dimethylbenzimidazole: step 2/2. Catalyzes the conversion of adenosylcobalamin 5'-phosphate to adenosylcobalamin (vitamin B12); involved in the assembly of the nucleotide loop of cobalamin. Also catalyzes the hydrolysis of the phospho group from alpha-ribazole 5'-phosphate to form alpha-ribazole. The sequence is that of Adenosylcobalamin/alpha-ribazole phosphatase (cobC) from Escherichia coli (strain K12).